Here is a 36-residue protein sequence, read N- to C-terminus: Pancreatic polypeptide (36 aa).

Position 36 is a tyrosine amide (Tyr36).

It belongs to the NPY family.

It is found in the secreted. Its function is as follows. Hormone secreted by pancreatic cells that acts as a regulator of pancreatic and gastrointestinal functions probably by signaling through the G protein-coupled receptor NPY4R2. The sequence is that of Pancreatic polypeptide (PPY) from Chinchilla chinchilla (Short-tailed chinchilla).